The sequence spans 932 residues: Alanine--tRNA ligase (932 aa).

4 residues coordinate Zn(2+): histidine 623, histidine 627, cysteine 726, and histidine 730. The interval 893-916 is disordered; sequence RVGGGGGGPPDFAQGGGPDVDSLD. A compositionally biased stretch (gly residues) spans 894–910; that stretch reads VGGGGGGPPDFAQGGGP.

Belongs to the class-II aminoacyl-tRNA synthetase family. The cofactor is Zn(2+).

It localises to the cytoplasm. The catalysed reaction is tRNA(Ala) + L-alanine + ATP = L-alanyl-tRNA(Ala) + AMP + diphosphate. Catalyzes the attachment of alanine to tRNA(Ala) in a two-step reaction: alanine is first activated by ATP to form Ala-AMP and then transferred to the acceptor end of tRNA(Ala). Also edits incorrectly charged Ser-tRNA(Ala) and Gly-tRNA(Ala) via its editing domain. The sequence is that of Alanine--tRNA ligase from Natronomonas pharaonis (strain ATCC 35678 / DSM 2160 / CIP 103997 / JCM 8858 / NBRC 14720 / NCIMB 2260 / Gabara) (Halobacterium pharaonis).